The primary structure comprises 258 residues: 6-carboxyhexanoate--CoA ligase (258 aa).

This sequence belongs to the BioW family. In terms of assembly, homodimer. It depends on Mg(2+) as a cofactor.

The enzyme catalyses heptanedioate + ATP + CoA = 6-carboxyhexanoyl-CoA + AMP + diphosphate. Its pathway is metabolic intermediate metabolism; pimeloyl-CoA biosynthesis; pimeloyl-CoA from pimelate: step 1/1. In terms of biological role, catalyzes the transformation of pimelate into pimeloyl-CoA with concomitant hydrolysis of ATP to AMP. This Bacillus subtilis (strain BSn5) protein is 6-carboxyhexanoate--CoA ligase.